The primary structure comprises 577 residues: F-box-like/WD repeat-containing protein TBL1X (577 aa).

One can recognise a LisH domain in the interval 55 to 87 (TSDEVNFLVYRYLQESGFSHSAFTFGIESHISQ). Residues 92-137 (GTLVPPAALISILQKGLQYVEAEISINEDGTVFDGRPIESLSLIDA) enclose the F-box-like domain. An N6-acetyllysine modification is found at lysine 153. Residues 177 to 202 (TTSAGVSHQNPSKNREATVNGEENRA) form a disordered region. Serine 183 bears the Phosphoserine mark. WD repeat units lie at residues 230–269 (GHES…NGGS), 286–325 (PSNK…ASTL), 327–366 (QHKG…AKQQ), 369–409 (FHSA…KTFQ), 410–449 (GHTN…CIHD), 452–500 (AHNK…CTHT), 503–542 (KHQE…LVHS), and 544–576 (RGTG…LDLR). Lysine 340 participates in a covalent cross-link: Glycyl lysine isopeptide (Lys-Gly) (interchain with G-Cter in SUMO2).

The protein belongs to the WD repeat EBI family. As to quaternary structure, homotetramer; dimer of dimers. Component of the N-Cor repressor complex, at least composed of NCOR1, NCOR2, HDAC3, TBL1X, TBL1R, CORO2A and GPS2. Interacts with GPS2 (when sumoylated); leading to protect GPS2 against degradation by the proteasome. Component of a E3 ubiquitin ligase complex containing UBE2D1, SIAH1, CACYBP/SIP, SKP1, APC and TBL1X. Probably part of other corepressor complexes, that do not contain NCOR1 and NCOR2. Interacts with histones H2B, H3a and H4. Interacts with MECP2; recruits TBL1X to the heterochromatin foci. Interacts with USP44. Ubiquitous.

It is found in the nucleus. Functionally, F-box-like protein involved in the recruitment of the ubiquitin/19S proteasome complex to nuclear receptor-regulated transcription units. Plays an essential role in transcription activation mediated by nuclear receptors. Probably acts as integral component of corepressor complexes that mediates the recruitment of the 19S proteasome complex, leading to the subsequent proteasomal degradation of transcription repressor complexes, thereby allowing cofactor exchange. The protein is F-box-like/WD repeat-containing protein TBL1X (TBL1X) of Homo sapiens (Human).